The following is a 281-amino-acid chain: E2F-associated phosphoprotein (281 aa).

M1 is modified (N-acetylmethionine). The tract at residues 1 to 27 (MNRLQDDYDPYAVEEPSDEEPALSSSE) is disordered. Positions 15–27 (EPSDEEPALSSSE) are enriched in acidic residues. S17 bears the Phosphoserine mark. The residue at position 37 (T37) is a Phosphothreonine. Residues S109 and S111 each carry the phosphoserine modification. Residues 222-245 (PENRRKRRSAKKMRSNPEDPAERE) form a disordered region. A compositionally biased stretch (basic residues) spans 225-235 (RRKRRSAKKMR). The segment covering 236–245 (SNPEDPAERE) has biased composition (basic and acidic residues).

In terms of assembly, interacts with E2F1. The C-terminal half binds the N-terminal of E2F1. Also interacts with E2F2 and E2F3, but not E2F4.

Its subcellular location is the cytoplasm. It localises to the nucleus. May play an important role in the fine-tuning of both major E2F1 activities, the regulation of the cell-cycle and the induction of apoptosis. Promotes S-phase entry, and inhibits p14(ARP) expression. This chain is E2F-associated phosphoprotein (Eapp), found in Mus musculus (Mouse).